A 410-amino-acid chain; its full sequence is Elongation factor Tu (410 aa).

The tr-type G domain occupies 10 to 214 (KPHVNIGTIG…EVDAYIPTPE (205 aa)). The interval 19–26 (GHVDHGKT) is G1. 19–26 (GHVDHGKT) contributes to the GTP binding site. A Mg(2+)-binding site is contributed by Thr26. The interval 60–64 (GITIN) is G2. Residues 81 to 84 (DCPG) are G3. GTP-binding positions include 81-85 (DCPGH) and 136-139 (NKED). The tract at residues 136 to 139 (NKED) is G4. The tract at residues 174 to 176 (SAL) is G5.

This sequence belongs to the TRAFAC class translation factor GTPase superfamily. Classic translation factor GTPase family. EF-Tu/EF-1A subfamily. In terms of assembly, monomer.

The protein localises to the cytoplasm. It carries out the reaction GTP + H2O = GDP + phosphate + H(+). GTP hydrolase that promotes the GTP-dependent binding of aminoacyl-tRNA to the A-site of ribosomes during protein biosynthesis. The chain is Elongation factor Tu from Gloeothece citriformis (strain PCC 7424) (Cyanothece sp. (strain PCC 7424)).